The sequence spans 156 residues: Small ribosomal subunit protein uS7 (156 aa).

This sequence belongs to the universal ribosomal protein uS7 family. Part of the 30S ribosomal subunit. Contacts proteins S9 and S11.

One of the primary rRNA binding proteins, it binds directly to 16S rRNA where it nucleates assembly of the head domain of the 30S subunit. Is located at the subunit interface close to the decoding center, probably blocks exit of the E-site tRNA. This is Small ribosomal subunit protein uS7 from Syntrophobacter fumaroxidans (strain DSM 10017 / MPOB).